Consider the following 314-residue polypeptide: Aspartate carbamoyltransferase catalytic subunit (314 aa).

Carbamoyl phosphate contacts are provided by Arg55 and Thr56. Position 83 (Lys83) interacts with L-aspartate. Arg105, His134, and Gln137 together coordinate carbamoyl phosphate. Residues Arg167 and Arg221 each contribute to the L-aspartate site. Residues Gly262 and Pro263 each contribute to the carbamoyl phosphate site.

The protein belongs to the aspartate/ornithine carbamoyltransferase superfamily. ATCase family. In terms of assembly, heterododecamer (2C3:3R2) of six catalytic PyrB chains organized as two trimers (C3), and six regulatory PyrI chains organized as three dimers (R2).

The enzyme catalyses carbamoyl phosphate + L-aspartate = N-carbamoyl-L-aspartate + phosphate + H(+). The protein operates within pyrimidine metabolism; UMP biosynthesis via de novo pathway; (S)-dihydroorotate from bicarbonate: step 2/3. Its function is as follows. Catalyzes the condensation of carbamoyl phosphate and aspartate to form carbamoyl aspartate and inorganic phosphate, the committed step in the de novo pyrimidine nucleotide biosynthesis pathway. This Corynebacterium urealyticum (strain ATCC 43042 / DSM 7109) protein is Aspartate carbamoyltransferase catalytic subunit.